The sequence spans 488 residues: ATP synthase subunit beta (488 aa).

164–171 (GGAGMGKT) serves as a coordination point for ATP.

The protein belongs to the ATPase alpha/beta chains family. As to quaternary structure, F-type ATPases have 2 components, CF(1) - the catalytic core - and CF(0) - the membrane proton channel. CF(1) has five subunits: alpha(3), beta(3), gamma(1), delta(1), epsilon(1). CF(0) has four main subunits: a(1), b(1), b'(1) and c(9-12).

The protein localises to the cellular thylakoid membrane. It carries out the reaction ATP + H2O + 4 H(+)(in) = ADP + phosphate + 5 H(+)(out). In terms of biological role, produces ATP from ADP in the presence of a proton gradient across the membrane. The catalytic sites are hosted primarily by the beta subunits. This chain is ATP synthase subunit beta, found in Synechococcus sp. (strain RCC307).